Here is a 263-residue protein sequence, read N- to C-terminus: 3'-5' ssDNA/RNA exonuclease TatD (263 aa).

3 residues coordinate a divalent metal cation: E91, H127, and H152.

This sequence belongs to the metallo-dependent hydrolases superfamily. TatD-type hydrolase family. TatD subfamily. As to quaternary structure, monomer. It depends on Mg(2+) as a cofactor.

The protein localises to the cytoplasm. In terms of biological role, 3'-5' exonuclease that prefers single-stranded DNA and RNA. May play a role in the H(2)O(2)-induced DNA damage repair. In Cronobacter turicensis (strain DSM 18703 / CCUG 55852 / LMG 23827 / z3032), this protein is 3'-5' ssDNA/RNA exonuclease TatD.